We begin with the raw amino-acid sequence, 118 residues long: Putative pterin-4-alpha-carbinolamine dehydratase (118 aa).

This sequence belongs to the pterin-4-alpha-carbinolamine dehydratase family.

The enzyme catalyses (4aS,6R)-4a-hydroxy-L-erythro-5,6,7,8-tetrahydrobiopterin = (6R)-L-erythro-6,7-dihydrobiopterin + H2O. In Xanthomonas oryzae pv. oryzae (strain PXO99A), this protein is Putative pterin-4-alpha-carbinolamine dehydratase.